The sequence spans 230 residues: Cytochrome c oxidase subunit 2 (230 aa).

At 1-14 (MAHPSQLGFQDAAS) the chain is on the mitochondrial intermembrane side. Residues 15–45 (PVMEELLHFHDHTLMIVFLISTLVLYIIMAM) form a helical membrane-spanning segment. Residues 46-59 (VSTKLTNKYILDSQ) lie on the Mitochondrial matrix side of the membrane. A helical membrane pass occupies residues 60–87 (EIEIVWTILPAVILIMIALPSLRILYLM). Residues 88 to 230 (DEINDPHLTI…SWSSLMLEEA (143 aa)) lie on the Mitochondrial intermembrane side of the membrane. Residues H161, C196, E198, C200, H204, and M207 each contribute to the Cu cation site. A Mg(2+)-binding site is contributed by E198.

This sequence belongs to the cytochrome c oxidase subunit 2 family. In terms of assembly, component of the cytochrome c oxidase (complex IV, CIV), a multisubunit enzyme composed of 14 subunits. The complex is composed of a catalytic core of 3 subunits MT-CO1, MT-CO2 and MT-CO3, encoded in the mitochondrial DNA, and 11 supernumerary subunits COX4I, COX5A, COX5B, COX6A, COX6B, COX6C, COX7A, COX7B, COX7C, COX8 and NDUFA4, which are encoded in the nuclear genome. The complex exists as a monomer or a dimer and forms supercomplexes (SCs) in the inner mitochondrial membrane with NADH-ubiquinone oxidoreductase (complex I, CI) and ubiquinol-cytochrome c oxidoreductase (cytochrome b-c1 complex, complex III, CIII), resulting in different assemblies (supercomplex SCI(1)III(2)IV(1) and megacomplex MCI(2)III(2)IV(2)). Found in a complex with TMEM177, COA6, COX18, COX20, SCO1 and SCO2. Interacts with TMEM177 in a COX20-dependent manner. Interacts with COX20. Interacts with COX16. The cofactor is Cu cation.

The protein localises to the mitochondrion inner membrane. The catalysed reaction is 4 Fe(II)-[cytochrome c] + O2 + 8 H(+)(in) = 4 Fe(III)-[cytochrome c] + 2 H2O + 4 H(+)(out). In terms of biological role, component of the cytochrome c oxidase, the last enzyme in the mitochondrial electron transport chain which drives oxidative phosphorylation. The respiratory chain contains 3 multisubunit complexes succinate dehydrogenase (complex II, CII), ubiquinol-cytochrome c oxidoreductase (cytochrome b-c1 complex, complex III, CIII) and cytochrome c oxidase (complex IV, CIV), that cooperate to transfer electrons derived from NADH and succinate to molecular oxygen, creating an electrochemical gradient over the inner membrane that drives transmembrane transport and the ATP synthase. Cytochrome c oxidase is the component of the respiratory chain that catalyzes the reduction of oxygen to water. Electrons originating from reduced cytochrome c in the intermembrane space (IMS) are transferred via the dinuclear copper A center (CU(A)) of subunit 2 and heme A of subunit 1 to the active site in subunit 1, a binuclear center (BNC) formed by heme A3 and copper B (CU(B)). The BNC reduces molecular oxygen to 2 water molecules using 4 electrons from cytochrome c in the IMS and 4 protons from the mitochondrial matrix. The chain is Cytochrome c oxidase subunit 2 (MT-CO2) from Squalus acanthias (Spiny dogfish).